The chain runs to 143 residues: Interleukin-4 (143 aa).

Residues 1–19 form the signal peptide; sequence MGLSPQLAAVLLCLLVCTG. 2 cysteine pairs are disulfide-bonded: cysteine 48–cysteine 88 and cysteine 70–cysteine 115. Asparagine 62 and asparagine 91 each carry an N-linked (GlcNAc...) asparagine glycan.

It belongs to the IL-4/IL-13 family.

The protein localises to the secreted. Functionally, participates in at least several B-cell activation processes as well as of other cell types. It is a costimulator of DNA-synthesis. It induces the expression of class II MHC molecules on resting B-cells. It enhances both secretion and cell surface expression of IgE and IgG1. It also regulates the expression of the low affinity Fc receptor for IgE (CD23) on both lymphocytes and monocytes. Positively regulates IL31RA expression in macrophages. Stimulates autophagy in dendritic cells by interfering with mTORC1 signaling and through the induction of RUFY4. In Meriones unguiculatus (Mongolian jird), this protein is Interleukin-4 (IL4).